We begin with the raw amino-acid sequence, 103 residues long: Sperm-associated antigen 11B (103 aa).

Positions 1–25 are cleaved as a signal peptide; sequence MRQRLLPSVTSLLLVALLFPGSSQA. Asn29 carries N-linked (GlcNAc...) asparagine glycosylation.

Belongs to the SPAG11 family. As to expression, specifically expressed in caput and proximal corpus of epididymis (at protein level). Present in the epididymal epithelium and on the sperm surface, with a subacrosomal equatorial distribution on the sperm head (at protein level).

The protein localises to the secreted. In terms of biological role, has antimicrobial activity against E.coli. Plays a role in the defense response in the male reproductive tract, contributing to sperm maturation, storage and protection. The chain is Sperm-associated antigen 11B from Homo sapiens (Human).